A 2072-amino-acid chain; its full sequence is Protein still life, isoform SIF type 1 (2072 aa).

Gly2 carries the N-myristoyl glycine lipid modification. Residues 29–147 (RRDGHLLSSF…ECCSPSFKFS (119 aa)) form the WH1 domain. 7 disordered regions span residues 153-188 (SYSL…EPQC), 245-284 (DNVA…NTNT), 327-355 (EGTQ…RNKD), 459-486 (NNTM…RGYP), 502-576 (EGSP…SPTS), 618-655 (AKSS…ELIR), and 699-747 (SGSS…YKSA). The span at 275–284 (VANSGVNTNT) shows a compositional bias: polar residues. 3 stretches are compositionally biased toward low complexity: residues 338–351 (SVGT…GTGT), 459–476 (NNTM…SGSR), and 522–553 (SSSN…PPQR). Over residues 564-576 (APNVTPTPGSPTS) the composition is skewed to polar residues. Residues 634 to 655 (IRDKERDRDRDGYYSDRNELIR) show a composition bias toward basic and acidic residues. Positions 732–743 (SLRQDSSLNDSG) are enriched in polar residues. Residues 840-958 (TGAVRKAGFL…SIHSACAAAF (119 aa)) form the PH domain. Residues 1088–1119 (GRGATKRRPPMLSRSNSGSSRRSMQMNSRDEP) form a disordered region. A compositionally biased stretch (low complexity) spans 1100–1114 (SRSNSGSSRRSMQMN). Residues 1121-1188 (KTFKVAMPDN…PHRNDLIENY (68 aa)) form the RBD domain. One can recognise a PDZ domain in the interval 1204–1293 (QVELQRTTLE…LSMMMRSSRT (90 aa)). The segment at 1403–1424 (AEQETRKSSPTGSVTSSVSTTA) is disordered. Over residues 1410–1424 (SSPTGSVTSSVSTTA) the composition is skewed to low complexity. The region spanning 1436–1630 (KLRKVVMELV…EKVAEHINEM (195 aa)) is the DH domain. 3 disordered regions span residues 1803 to 1832 (MKNF…NSQT), 1844 to 2039 (HGSH…YQPV), and 2051 to 2072 (PRDM…DVKN). 2 stretches are compositionally biased toward low complexity: residues 1811 to 1821 (GSVSGHSSQGM) and 1926 to 1943 (QQQQ…QQGH). The segment covering 1970-1984 (HSSDIERIDPGTKSE) has biased composition (basic and acidic residues). Over residues 2007–2022 (LTLSTTSTLSVGSTGS) the composition is skewed to low complexity. Residues 2023-2032 (QARLIQSSHP) show a composition bias toward polar residues.

In terms of tissue distribution, expressed in both larval and adult brains, mainly in a subset of neurons but not in glia. In the adult eye is expressed in the two primary pigment cells in the subapical region of the eye. Also present in photoreceptors.

Its subcellular location is the synapse. In terms of biological role, regulates synaptic differentiation through the organization of actin cytoskeleton possibly by activating Rho-like GTPases. Is likely a factor in the cascade of Rac1 or Cdc42 in the neurons. May play a role in maintaining proper septate junction functions. Required for eye development and most likely affects corneal lens-formation. The protein is Protein still life, isoform SIF type 1 (sif) of Drosophila melanogaster (Fruit fly).